We begin with the raw amino-acid sequence, 59 residues long: Lantibiotic lacticin 3147 A1 (59 aa).

The propeptide occupies 1-29; that stretch reads MNKNEIETQPVTWLEEVSDQNFDEDVFGA. The lanthionine (Cys-Ser) cross-link spans 30–31; that stretch reads CS. 2,3-didehydrobutyrine is present on residues T32 and T34. S36 is modified (2,3-didehydroalanine (Ser)). The lanthionine (Ser-Cys) cross-link spans 38–48; the sequence is SDYWGNNGAWC. Cross-links (beta-methyllanthionine (Thr-Cys)) lie at residues 49-54 and 51-58; these read TLTHEC and THECMAWC.

Post-translationally, maturation of lantibiotics involves the enzymatic conversion of Thr, and Ser into dehydrated AA and the formation of thioether bonds with cysteine. This is followed by membrane translocation and cleavage of the modified precursor. It is not established whether the 2,3-didehydrobutyrines are the E- or Z-isomers. In the NMR model they were assumed to be the Z-isomer.

Its subcellular location is the secreted. In terms of biological role, lanthionine-containing peptide antibiotic (lantibiotic) active on Gram-positive bacteria. The bactericidal activity of lantibiotics is based on depolarization of energized bacterial cytoplasmic membranes, initiated by the formation of aqueous transmembrane pores. When present individually lacticin 3147 A1 exhibits strong activity towards L.lactis strain AM2, weak activity towards L.lactis strain HP and no activity towards L.lactis strain IFPL359, but when combined with lacticin 3147 A2 it displays strong activity towards all three strains. The sequence is that of Lantibiotic lacticin 3147 A1 from Lactococcus lactis subsp. lactis (Streptococcus lactis).